A 130-amino-acid chain; its full sequence is Fumarate reductase subunit C (130 aa).

Helical transmembrane passes span 37–57, 60–80, and 109–129; these read VWFSILLIYGVFALKSGPAGW, FVGFLQNPLVLLINIITLLAA, and VIKALWVVTIVATAIILAVAL.

It belongs to the FrdC family. As to quaternary structure, part of an enzyme complex containing four subunits: a flavoprotein (FrdA), an iron-sulfur protein (FrdB), and two hydrophobic anchor proteins (FrdC and FrdD).

The protein resides in the cell inner membrane. In terms of biological role, two distinct, membrane-bound, FAD-containing enzymes are responsible for the catalysis of fumarate and succinate interconversion; fumarate reductase is used in anaerobic growth, and succinate dehydrogenase is used in aerobic growth. Anchors the catalytic components of the fumarate reductase complex to the cell inner membrane, binds quinones. This is Fumarate reductase subunit C from Yersinia enterocolitica serotype O:8 / biotype 1B (strain NCTC 13174 / 8081).